We begin with the raw amino-acid sequence, 122 residues long: Small ribosomal subunit protein uS13 (122 aa).

Residues 95–116 (GLPCRGQKTKTNARTRKGKKKT) show a composition bias toward basic residues. A disordered region spans residues 95–122 (GLPCRGQKTKTNARTRKGKKKTVGAATK).

It belongs to the universal ribosomal protein uS13 family. In terms of assembly, part of the 30S ribosomal subunit. Forms a loose heterodimer with protein S19. Forms two bridges to the 50S subunit in the 70S ribosome.

Its function is as follows. Located at the top of the head of the 30S subunit, it contacts several helices of the 16S rRNA. In the 70S ribosome it contacts the 23S rRNA (bridge B1a) and protein L5 of the 50S subunit (bridge B1b), connecting the 2 subunits; these bridges are implicated in subunit movement. Contacts the tRNAs in the A and P-sites. The polypeptide is Small ribosomal subunit protein uS13 (Aliarcobacter butzleri (strain RM4018) (Arcobacter butzleri)).